Consider the following 879-residue polypeptide: Alanine--tRNA ligase (879 aa).

The Zn(2+) site is built by His-566, His-570, Cys-668, and His-672.

This sequence belongs to the class-II aminoacyl-tRNA synthetase family. Requires Zn(2+) as cofactor.

The protein localises to the cytoplasm. The enzyme catalyses tRNA(Ala) + L-alanine + ATP = L-alanyl-tRNA(Ala) + AMP + diphosphate. In terms of biological role, catalyzes the attachment of alanine to tRNA(Ala) in a two-step reaction: alanine is first activated by ATP to form Ala-AMP and then transferred to the acceptor end of tRNA(Ala). Also edits incorrectly charged Ser-tRNA(Ala) and Gly-tRNA(Ala) via its editing domain. The polypeptide is Alanine--tRNA ligase (Clostridium perfringens (strain ATCC 13124 / DSM 756 / JCM 1290 / NCIMB 6125 / NCTC 8237 / Type A)).